The sequence spans 226 residues: Ribonuclease 3 (226 aa).

The RNase III domain occupies Ile-6–Asp-128. Glu-41 contributes to the Mg(2+) binding site. Asp-45 is an active-site residue. Residues Asp-114 and Glu-117 each coordinate Mg(2+). Glu-117 is an active-site residue. In terms of domain architecture, DRBM spans Asp-155–Leu-225.

Belongs to the ribonuclease III family. As to quaternary structure, homodimer. Requires Mg(2+) as cofactor.

The protein localises to the cytoplasm. It carries out the reaction Endonucleolytic cleavage to 5'-phosphomonoester.. Its function is as follows. Digests double-stranded RNA. Involved in the processing of primary rRNA transcript to yield the immediate precursors to the large and small rRNAs (23S and 16S). Processes some mRNAs, and tRNAs when they are encoded in the rRNA operon. Processes pre-crRNA and tracrRNA of type II CRISPR loci if present in the organism. In Enterobacter sp. (strain 638), this protein is Ribonuclease 3.